The following is a 316-amino-acid chain: Pantothenate kinase (316 aa).

ATP is bound at residue 95-102; it reads GSVAVGKS.

It belongs to the prokaryotic pantothenate kinase family.

The protein localises to the cytoplasm. It catalyses the reaction (R)-pantothenate + ATP = (R)-4'-phosphopantothenate + ADP + H(+). The protein operates within cofactor biosynthesis; coenzyme A biosynthesis; CoA from (R)-pantothenate: step 1/5. This is Pantothenate kinase from Photorhabdus laumondii subsp. laumondii (strain DSM 15139 / CIP 105565 / TT01) (Photorhabdus luminescens subsp. laumondii).